A 399-amino-acid polypeptide reads, in one-letter code: Elongation factor Tu (399 aa).

A tr-type G domain is found at 10 to 209 (KPHVNIGTIG…EVDAYIPTPK (200 aa)). Positions 19–26 (GHVDHGKT) are G1. 19–26 (GHVDHGKT) contributes to the GTP binding site. Threonine 26 is a Mg(2+) binding site. The segment at 60 to 64 (GITIA) is G2. The G3 stretch occupies residues 81-84 (DCPG). Residues 81–85 (DCPGH) and 136–139 (NKQD) each bind GTP. The interval 136-139 (NKQD) is G4. Positions 174-176 (SAL) are G5.

It belongs to the TRAFAC class translation factor GTPase superfamily. Classic translation factor GTPase family. EF-Tu/EF-1A subfamily. Monomer.

Its subcellular location is the cytoplasm. The catalysed reaction is GTP + H2O = GDP + phosphate + H(+). In terms of biological role, GTP hydrolase that promotes the GTP-dependent binding of aminoacyl-tRNA to the A-site of ribosomes during protein biosynthesis. In Helicobacter pylori (strain P12), this protein is Elongation factor Tu.